A 356-amino-acid polypeptide reads, in one-letter code: Kelch domain-containing protein VC_1773 (356 aa).

Kelch repeat units follow at residues 72–125 (KLYV…SLSP), 163–210 (TIFM…HKNN), 288–331 (NLYA…ASNG), and 333–355 (AMYV…SLLM).

The chain is Kelch domain-containing protein VC_1773 from Vibrio cholerae serotype O1 (strain ATCC 39315 / El Tor Inaba N16961).